The following is a 170-amino-acid chain: Peptide methionine sulfoxide reductase MsrA (170 aa).

Cys-13 is an active-site residue.

It belongs to the MsrA Met sulfoxide reductase family.

The enzyme catalyses L-methionyl-[protein] + [thioredoxin]-disulfide + H2O = L-methionyl-(S)-S-oxide-[protein] + [thioredoxin]-dithiol. It catalyses the reaction [thioredoxin]-disulfide + L-methionine + H2O = L-methionine (S)-S-oxide + [thioredoxin]-dithiol. Its function is as follows. Has an important function as a repair enzyme for proteins that have been inactivated by oxidation. Catalyzes the reversible oxidation-reduction of methionine sulfoxide in proteins to methionine. In Nocardia farcinica (strain IFM 10152), this protein is Peptide methionine sulfoxide reductase MsrA.